Consider the following 191-residue polypeptide: Protein GrpE (191 aa).

Belongs to the GrpE family. Homodimer.

Its subcellular location is the cytoplasm. Functionally, participates actively in the response to hyperosmotic and heat shock by preventing the aggregation of stress-denatured proteins, in association with DnaK and GrpE. It is the nucleotide exchange factor for DnaK and may function as a thermosensor. Unfolded proteins bind initially to DnaJ; upon interaction with the DnaJ-bound protein, DnaK hydrolyzes its bound ATP, resulting in the formation of a stable complex. GrpE releases ADP from DnaK; ATP binding to DnaK triggers the release of the substrate protein, thus completing the reaction cycle. Several rounds of ATP-dependent interactions between DnaJ, DnaK and GrpE are required for fully efficient folding. This Nitratidesulfovibrio vulgaris (strain ATCC 29579 / DSM 644 / CCUG 34227 / NCIMB 8303 / VKM B-1760 / Hildenborough) (Desulfovibrio vulgaris) protein is Protein GrpE.